Consider the following 534-residue polypeptide: Arginine--tRNA ligase (534 aa).

The 'HIGH' region signature appears at 120-130 (ANPTGFLHLGH).

Belongs to the class-I aminoacyl-tRNA synthetase family. As to quaternary structure, monomer.

The protein resides in the cytoplasm. The catalysed reaction is tRNA(Arg) + L-arginine + ATP = L-arginyl-tRNA(Arg) + AMP + diphosphate. This is Arginine--tRNA ligase from Mesomycoplasma hyopneumoniae (strain J / ATCC 25934 / NCTC 10110) (Mycoplasma hyopneumoniae).